The sequence spans 46 residues: Delta-actitoxin-Avd1d (46 aa).

Cystine bridges form between cysteine 4-cysteine 44, cysteine 6-cysteine 34, and cysteine 27-cysteine 45.

The protein belongs to the sea anemone sodium channel inhibitory toxin family. Type I subfamily.

It localises to the secreted. The protein resides in the nematocyst. Binds specifically to voltage-gated sodium channels (Nav), thereby delaying their inactivation during signal transduction. Thus it strongly stimulates mammalian cardiac muscle contraction. The polypeptide is Delta-actitoxin-Avd1d (Anemonia sulcata (Mediterranean snakelocks sea anemone)).